A 593-amino-acid polypeptide reads, in one-letter code: Transmembrane 9 superfamily member 4 (593 aa).

The signal sequence occupies residues 1–25 (MVLLPSMTSLLLVFLFLYGVSPVIS). The Lumenal segment spans residues 26-230 (DGSDHRYKVG…SMPHHLEIHW (205 aa)). Residues 231–251 (FSIINSCVTVLLLTGFLATIL) form a helical membrane-spanning segment. At 252–303 (MRVLKNDFVKYAHDEEAVDDQEETGWKLIHGDVFRFPKHKSLLAAALGSGTQ) the chain is on the cytoplasmic side. Residues 304 to 324 (LFTLAVFIFMLALVGVFYPYN) form a helical membrane-spanning segment. The Lumenal portion of the chain corresponds to 325–326 (RG). The chain crosses the membrane as a helical span at residues 327 to 347 (ALFTALVVIYALTSGIAGYTA). The Cytoplasmic portion of the chain corresponds to 348–366 (ASFYCQLEGTNWVRNVILT). A helical transmembrane segment spans residues 367–387 (GSLFCGPLLITFSFLNTVAIA). The Lumenal portion of the chain corresponds to 388–398 (YQATAALPFGT). Residues 399-419 (IVVIFLIWALVTSPLLILGGI) traverse the membrane as a helical segment. Over 420-453 (AGKNRKSEFQAPCRTTKYPREIPPMRWYRRTLPQ) the chain is Cytoplasmic. A helical membrane pass occupies residues 454–474 (MAMAGFLPFSAIYIELYYIFA). Topologically, residues 475–486 (SVWGHRIYTIYS) are lumenal. Residues 487–507 (ILSIVFLILVIVTAFITVALT) traverse the membrane as a helical segment. Residues 508-522 (YFQLAAEDHEWWWRS) are Cytoplasmic-facing. The chain crosses the membrane as a helical span at residues 523–543 (LLCGGSTGLFIYAYCLYYYYA). Topologically, residues 544-554 (RSDMSGFMQTS) are lumenal. The helical transmembrane segment at 555–575 (FFFGYMACICYGFFLMLGTIG) threads the bilayer. At 576 to 593 (FCASLLFVRHIYRSIKCE) the chain is on the cytoplasmic side. The short motif at 582–587 (FVRHIY) is the Endoplasmic reticulum export signal element. The Golgi retention signal motif lies at 591–593 (KCE).

It belongs to the nonaspanin (TM9SF) (TC 9.A.2) family.

It is found in the endosome membrane. Its subcellular location is the golgi apparatus membrane. In Arabidopsis thaliana (Mouse-ear cress), this protein is Transmembrane 9 superfamily member 4.